A 241-amino-acid chain; its full sequence is Alkylated DNA repair protein ALKBH6 homolog (241 aa).

A Fe2OG dioxygenase domain is found at 87–232; that stretch reads AINHVLINEY…RVSLTCRLVP (146 aa). Residues His-105, Asp-107, and His-181 each contribute to the Fe cation site. 2-oxoglutarate contacts are provided by Arg-223 and Arg-229.

This sequence belongs to the alkB family. Fe(2+) is required as a cofactor.

The protein localises to the nucleus. Probable RNA demethylase that binds to both N6-methyladenosine-containing- (m(6)A) and C5-methylcytidine-containing- (m(5)C) RNAs, thus being a probable m(6)A and m(5)C eraser. Involved in responses to abscisic acid (ABA) via the modulation of the expression of ABA signaling-related genes (e.g. ABI3 and ABI4). Acts as a negative regulator during seed germination under abiotic stresses (e.g. salt, cold and ABA). Positive modulator of seedling growth and survival in response to drought and heat, but counteracts tolerance to salt. The chain is Alkylated DNA repair protein ALKBH6 homolog from Arabidopsis thaliana (Mouse-ear cress).